The following is a 97-amino-acid chain: Large ribosomal subunit protein bL28 (97 aa).

The protein belongs to the bacterial ribosomal protein bL28 family.

In Bartonella henselae (strain ATCC 49882 / DSM 28221 / CCUG 30454 / Houston 1) (Rochalimaea henselae), this protein is Large ribosomal subunit protein bL28.